Here is a 79-residue protein sequence, read N- to C-terminus: Acyl carrier protein (79 aa).

Residues 2–77 (SDIGERVKKI…DATKFLEKNA (76 aa)) enclose the Carrier domain. At Ser-37 the chain carries O-(pantetheine 4'-phosphoryl)serine.

This sequence belongs to the acyl carrier protein (ACP) family. In terms of processing, 4'-phosphopantetheine is transferred from CoA to a specific serine of apo-ACP by AcpS. This modification is essential for activity because fatty acids are bound in thioester linkage to the sulfhydryl of the prosthetic group.

The protein localises to the cytoplasm. Its pathway is lipid metabolism; fatty acid biosynthesis. Functionally, carrier of the growing fatty acid chain in fatty acid biosynthesis. The protein is Acyl carrier protein of Bradyrhizobium diazoefficiens (strain JCM 10833 / BCRC 13528 / IAM 13628 / NBRC 14792 / USDA 110).